A 188-amino-acid chain; its full sequence is Selenoprotein S B (188 aa).

Residues glutamate 29–isoleucine 49 traverse the membrane as a helical segment. Basic and acidic residues predominate over residues threonine 116–serine 125. Residues threonine 116–glycine 188 are disordered. A compositionally biased stretch (low complexity) spans alanine 136–proline 147. Residue selenocysteine 187 is a non-standard amino acid, selenocysteine.

Belongs to the selenoprotein S family.

The protein resides in the endoplasmic reticulum membrane. Its subcellular location is the cytoplasm. Functionally, involved in the degradation process of misfolded endoplasmic reticulum (ER) luminal proteins. Participates in the transfer of misfolded proteins from the ER to the cytosol, where they are destroyed by the proteasome in a ubiquitin-dependent manner. The sequence is that of Selenoprotein S B (vimp-b) from Xenopus laevis (African clawed frog).